Consider the following 926-residue polypeptide: Alpha-aminoadipic semialdehyde synthase, mitochondrial (926 aa).

The N-terminal 27 residues, 1–27 (MLRAQRLRLARLRACVSRGLHHKPVMA), are a transit peptide targeting the mitochondrion. Residues 28-455 (LRREDVNAWE…DAVITSNGLL (428 aa)) are lysine-ketoglutarate reductase. N6-acetyllysine is present on residues Lys-48, Lys-52, and Lys-56. Residue Lys-93 is modified to N6-acetyllysine; alternate. Position 93 is an N6-succinyllysine; alternate (Lys-93). Lys-128 carries the post-translational modification N6-acetyllysine. Position 138 is an N6-acetyllysine; alternate (Lys-138). Lys-138 bears the N6-succinyllysine; alternate mark. Residue Lys-274 is modified to N6-succinyllysine. Lys-286 carries the N6-acetyllysine; alternate modification. The residue at position 286 (Lys-286) is an N6-succinyllysine; alternate. N6-succinyllysine is present on Lys-333. At Lys-458 the chain carries N6-acetyllysine; alternate. Lys-458 is modified (N6-succinyllysine; alternate). Residues 477–926 (MSTKKKVLVL…VFNTQSTIKL (450 aa)) form a saccharopine dehydrogenase region. 3 residues coordinate NAD(+): Ser-488, Asp-512, and Gln-516. N6-acetyllysine; alternate is present on residues Lys-523 and Lys-535. Residues Lys-523 and Lys-535 each carry the N6-succinyllysine; alternate modification. The NAD(+) site is built by Leu-554, Ala-576, and Ser-577. 577 to 578 (SY) lines the L-saccharopine pocket. Lys-584 carries the post-translational modification N6-acetyllysine; alternate. An N6-succinyllysine; alternate modification is found at Lys-584. Leu-603, Asp-604, and Pro-605 together coordinate NAD(+). Asp-604 lines the L-saccharopine pocket. Arg-703 contacts L-saccharopine. Lys-707 carries the N6-acetyllysine modification. 724-726 (TLR) lines the L-saccharopine pocket. An N6-succinyllysine modification is found at Lys-732. Lys-739 is subject to N6-acetyllysine. Residue Lys-761 is modified to N6-acetyllysine; alternate. Lys-761 is modified (N6-succinyllysine; alternate). Residues Lys-778 and Lys-780 each carry the N6-acetyllysine modification.

The protein in the N-terminal section; belongs to the AlaDH/PNT family. In the C-terminal section; belongs to the saccharopine dehydrogenase family. Homotetramer.

The protein resides in the mitochondrion. The catalysed reaction is L-saccharopine + NADP(+) + H2O = L-lysine + 2-oxoglutarate + NADPH + H(+). It catalyses the reaction L-saccharopine + NAD(+) + H2O = (S)-2-amino-6-oxohexanoate + L-glutamate + NADH + H(+). Its pathway is amino-acid degradation; L-lysine degradation via saccharopine pathway; glutaryl-CoA from L-lysine: step 1/6. It functions in the pathway amino-acid degradation; L-lysine degradation via saccharopine pathway; glutaryl-CoA from L-lysine: step 2/6. Bifunctional enzyme that catalyzes the first two steps in lysine degradation. In Rattus norvegicus (Rat), this protein is Alpha-aminoadipic semialdehyde synthase, mitochondrial.